Consider the following 452-residue polypeptide: Probable multidrug resistance protein NorM (452 aa).

Transmembrane regions (helical) follow at residues 14–34 (LLHI…ITFL), 56–76 (LWTP…PIVA), 97–117 (VAAL…DLIL), 129–149 (IAKH…VYTV), 164–184 (MMIT…FIFG), 195–215 (GAGL…FFII), 244–264 (IGLP…AVTL), 284–304 (ASLL…VVGF), 319–339 (LIGI…ILLF), 360–380 (FLIY…IQGA), 392–412 (AAAF…VGTF), and 417–437 (AFGY…GLFF).

Belongs to the multi antimicrobial extrusion (MATE) (TC 2.A.66.1) family.

It is found in the cell membrane. Its function is as follows. Multidrug efflux pump. The polypeptide is Probable multidrug resistance protein NorM (norM) (Bacillus subtilis (strain 168)).